We begin with the raw amino-acid sequence, 86 residues long: Cell division topological specificity factor (86 aa).

Belongs to the MinE family.

Prevents the cell division inhibition by proteins MinC and MinD at internal division sites while permitting inhibition at polar sites. This ensures cell division at the proper site by restricting the formation of a division septum at the midpoint of the long axis of the cell. The polypeptide is Cell division topological specificity factor (Bordetella petrii (strain ATCC BAA-461 / DSM 12804 / CCUG 43448)).